The chain runs to 206 residues: Uridine kinase (206 aa).

11–18 (GGTGSGKS) serves as a coordination point for ATP.

It belongs to the uridine kinase family.

It is found in the cytoplasm. The catalysed reaction is uridine + ATP = UMP + ADP + H(+). The enzyme catalyses cytidine + ATP = CMP + ADP + H(+). It participates in pyrimidine metabolism; CTP biosynthesis via salvage pathway; CTP from cytidine: step 1/3. Its pathway is pyrimidine metabolism; UMP biosynthesis via salvage pathway; UMP from uridine: step 1/1. This Clostridium botulinum (strain Langeland / NCTC 10281 / Type F) protein is Uridine kinase.